Here is a 240-residue protein sequence, read N- to C-terminus: Dihydromonapterin reductase (240 aa).

Tyr152 functions as the Proton acceptor in the catalytic mechanism.

The protein belongs to the short-chain dehydrogenases/reductases (SDR) family. FolM subfamily.

It carries out the reaction (6S)-5,6,7,8-tetrahydrofolate + NADP(+) = 7,8-dihydrofolate + NADPH + H(+). It catalyses the reaction 7,8-dihydromonapterin + NADPH + H(+) = 5,6,7,8-tetrahydromonapterin + NADP(+). Functionally, catalyzes the reduction of dihydromonapterin to tetrahydromonapterin. Also has lower activity with dihydrofolate. This is Dihydromonapterin reductase (folM) from Escherichia coli (strain SMS-3-5 / SECEC).